We begin with the raw amino-acid sequence, 119 residues long: MVKLAFPRELRLLTPSHFTFVFQQPQRAGTPQITILGRLNSLGHPRIGLTVAKKNVKRAHERNRIKRLTRESFRLRQHELPPMDFVVVAKRGVADLDNRALSEALEKLWRRHCRLARGS.

It belongs to the RnpA family. In terms of assembly, consists of a catalytic RNA component (M1 or rnpB) and a protein subunit.

The catalysed reaction is Endonucleolytic cleavage of RNA, removing 5'-extranucleotides from tRNA precursor.. In terms of biological role, RNaseP catalyzes the removal of the 5'-leader sequence from pre-tRNA to produce the mature 5'-terminus. It can also cleave other RNA substrates such as 4.5S RNA. The protein component plays an auxiliary but essential role in vivo by binding to the 5'-leader sequence and broadening the substrate specificity of the ribozyme. This is Ribonuclease P protein component from Klebsiella pneumoniae (strain 342).